Consider the following 89-residue polypeptide: Small membrane A-kinase anchor protein (89 aa).

Residues 1–29 (MGCMKSKRRDPTQNSDSSEKVDGKPGKHG) form a disordered region. The N-myristoyl glycine moiety is linked to residue glycine 2. A compositionally biased stretch (basic and acidic residues) spans 17-29 (SSEKVDGKPGKHG).

The protein belongs to the small membrane AKAP family. Post-translationally, may be palmitoylated at Cys-3.

Its subcellular location is the cell membrane. Its function is as follows. Binds to type I regulatory subunits of protein kinase A and may anchor/target them to the plasma membrane. This is Small membrane A-kinase anchor protein from Danio rerio (Zebrafish).